We begin with the raw amino-acid sequence, 305 residues long: tRNA dimethylallyltransferase (305 aa).

14 to 21 (GPTASGKS) lines the ATP pocket. Residue 16-21 (TASGKS) participates in substrate binding. An interaction with substrate tRNA region spans residues 39–42 (DSMQ).

It belongs to the IPP transferase family. In terms of assembly, monomer. It depends on Mg(2+) as a cofactor.

It carries out the reaction adenosine(37) in tRNA + dimethylallyl diphosphate = N(6)-dimethylallyladenosine(37) in tRNA + diphosphate. Its function is as follows. Catalyzes the transfer of a dimethylallyl group onto the adenine at position 37 in tRNAs that read codons beginning with uridine, leading to the formation of N6-(dimethylallyl)adenosine (i(6)A). The protein is tRNA dimethylallyltransferase of Bradyrhizobium sp. (strain BTAi1 / ATCC BAA-1182).